The chain runs to 894 residues: Phosphinomethylmalate isomerase (894 aa).

Cysteine 438, cysteine 504, and cysteine 507 together coordinate [4Fe-4S] cluster.

This sequence belongs to the aconitase/IPM isomerase family. It depends on [4Fe-4S] cluster as a cofactor.

It catalyses the reaction phosphinomethylmalate = phosphinomethylisomalate. The catalysed reaction is phosphinomethylmalate = 2-(phosphinatomethylidene)butanedioate + H2O. It carries out the reaction 2-(phosphinatomethylidene)butanedioate + H2O = phosphinomethylisomalate. Its pathway is secondary metabolite biosynthesis; bialaphos biosynthesis. Its function is as follows. Isomerase involved in the biosynthesis of phosphinothricin tripeptide (PTT), also known as bialaphos (BA), a natural-product antibiotic and potent herbicide. Probably catalyzes the isomerization of phosphinomethylmalate to phosphinomethylisomalate. Shows no standard aconitase activity with citrate as a substrate and is not able to complement an acnA mutant. The sequence is that of Phosphinomethylmalate isomerase from Streptomyces viridochromogenes (strain DSM 40736 / JCM 4977 / BCRC 1201 / Tue 494).